We begin with the raw amino-acid sequence, 210 residues long: uncharacterized protein (210 aa).

This is an uncharacterized protein from Aquifex aeolicus (strain VF5).